The primary structure comprises 389 residues: Urotensin-2 receptor (389 aa).

The span at 1–10 (MALTPESPSS) shows a compositional bias: polar residues. Residues 1–39 (MALTPESPSSFPGLAATGSSVPEPPGGPNATLNSSWASP) form a disordered region. Topologically, residues 1–54 (MALTPESPSSFPGLAATGSSVPEPPGGPNATLNSSWASPTEPSSLEDLVATGTI) are extracellular. Asn-29 and Asn-33 each carry an N-linked (GlcNAc...) asparagine glycan. Positions 30–39 (ATLNSSWASP) are enriched in polar residues. Residues 55-77 (GTLLSAMGVVGVVGNAYTLVVTC) form a helical membrane-spanning segment. The Cytoplasmic segment spans residues 78–87 (RSLRAVASMY). A helical transmembrane segment spans residues 88–113 (VYVVNLALADLLYLLSIPFIVATYVT). The Extracellular portion of the chain corresponds to 114-124 (KEWHFGDVGCR). A disulfide bridge links Cys-123 with Cys-199. Residues 125–146 (VLFGLDFLTMHASIFTLTVMSS) traverse the membrane as a helical segment. Residues 147 to 167 (ERYAAVLRPLDTVQRPKGYRK) lie on the Cytoplasmic side of the membrane. Residues 168–186 (LLALGTWLLALLLTLPVML) form a helical membrane-spanning segment. Topologically, residues 187–209 (AMRLVRRGPKSLCLPAWGPRAHR) are extracellular. A helical transmembrane segment spans residues 210–232 (AYLTLLFATSIAGPGLLIGLLYA). Residues 233–258 (RLARAYRRSQRASFKRARRPGARALR) lie on the Cytoplasmic side of the membrane. Residues 259–284 (LVLGIVLLFWACFLPFWLWQLLAQYH) form a helical membrane-spanning segment. Over 285-297 (QAPLAPRTARIVN) the chain is Extracellular. Residues 298-318 (YLTTCLTYGNSCANPFLYTLL) form a helical membrane-spanning segment. Over 319–389 (TRNYRDHLRG…PAPEGPRAPA (71 aa)) the chain is Cytoplasmic. Residues 328 to 389 (GRVRGPGSGG…PAPEGPRAPA (62 aa)) form a disordered region. Positions 331–340 (RGPGSGGGRG) are enriched in gly residues. The segment covering 355-368 (SGRSLSSCSPQPTD) has biased composition (polar residues). A compositionally biased stretch (pro residues) spans 377–389 (PARPAPEGPRAPA).

It belongs to the G-protein coupled receptor 1 family. Most abundant expression in the heart and pancreas.

The protein localises to the cell membrane. Its function is as follows. High affinity receptor for urotensin-2 and urotensin-2B. The activity of this receptor is mediated by a G-protein that activate a phosphatidylinositol-calcium second messenger system. The sequence is that of Urotensin-2 receptor (UTS2R) from Homo sapiens (Human).